Here is a 274-residue protein sequence, read N- to C-terminus: Penicillin-insensitive murein endopeptidase (274 aa).

An N-terminal signal peptide occupies residues 1–19 (MNKTAIALLALLASSASLA). 3 cysteine pairs are disulfide-bonded: Cys44–Cys265, Cys187–Cys235, and Cys216–Cys223. Residues His110, His113, Asp120, Asp147, His150, and His211 each contribute to the Zn(2+) site. The segment at 228-274 (LPPSGDGCGAELQSWFEPPKPGTTKPEKKTPPPLPPSCQALLDEHVI) is disordered.

It belongs to the peptidase M74 family. As to quaternary structure, dimer. It depends on Zn(2+) as a cofactor.

It localises to the periplasm. With respect to regulation, inhibited by Zn(2+) at 10 mM and by metal chelating agents EDTA and 1,10-phenanthroline. Functionally, murein endopeptidase that cleaves the D-alanyl-meso-2,6-diamino-pimelyl amide bond that connects peptidoglycan strands. Likely plays a role in the removal of murein from the sacculus and could also play a role in the integration of nascent murein strands into the sacculus. The protein is Penicillin-insensitive murein endopeptidase (mepA) of Escherichia coli (strain K12).